A 47-amino-acid polypeptide reads, in one-letter code: IgA-inducing protein (47 aa).

Residues 1 to 24 (MKKRSVSGCNITILAVVFSHLSAG) form the signal peptide.

Expressed in Peyer patches, spleen, thymus, liver and mesenteric lymph node. Expressed at high levels by dendritic cells, and at lower levels by T-cells, monocytes and B-cells.

It localises to the secreted. Its function is as follows. Enhances IgA secretion from B-cells stimulated via CD40. In Bos taurus (Bovine), this protein is IgA-inducing protein (IGIP).